The chain runs to 53 residues: UPF0391 membrane protein Bxeno_A2958 (53 aa).

Transmembrane regions (helical) follow at residues 5-25 (AIVF…GIAA) and 30-50 (IAKI…LLGV).

The protein belongs to the UPF0391 family.

It localises to the cell membrane. This is UPF0391 membrane protein Bxeno_A2958 from Paraburkholderia xenovorans (strain LB400).